We begin with the raw amino-acid sequence, 702 residues long: MRHKININNHIEIFDTDKVAKQAAGAVLMQEKNAVVLATVAREEKMVEEDFLPLTVQYIEKAYAAGKIPGGYVKRETKPGDSETLSARIIDRSLRPLFPKGYAYPTQIVVMVLSADPEVDLQVMSLNAASVALYLSDIPIKAPVCGVRIGRINNEFVLNPSNSELKNSTLDLYVAGVKDELLMIEMRALSNKKDNQHCMNELSEDDTLKALDFASSAILRGSNEYEKAFAAYRKNSKLEFKIESDNIQIIDYIKNTYITKLKIAINQMAKSERASEILQIAKEIESESMAIENEWKFEDIEKALHVCKRELVRNQIINENKRADGRGLKDVRKIDIETNILPSAHGSCLFTRGQTQALVVATLGNDNDAQMSDMLTEKNPICEKFMVNYNFPGFSVGEASPIKAPGRRELGHGNLAKRALYPSVDADYIHTIRLVSEILESNGSSSMATVCGGALALRAAGVKSEKLVAGVAMGLVFEEEKYAILTDIMGLEDHDGDMDFKVAGSHDGITALQMDIKLGGIEQKVLQEALYQAKEARGYILNLMQEACEKIIVNEAILPKVEIFNVDPNKIPDIIGQGGKTIKDIIEKFEVNIDLDRDKGEVKIAGIDHNLISQSKEYILNLLHSKGSNKRRDKKEMPKFDIGEEFLGRVQKVVEFGVFVELKEGVDGLLHNSKIKEKLEVGHEIKVKVAEIKNGKVSLDLA.

Mg(2+) contacts are provided by D493 and D499. Residues 559–619 (PKVEIFNVDP…NLISQSKEYI (61 aa)) enclose the KH domain. The S1 motif domain occupies 643-702 (GEEFLGRVQKVVEFGVFVELKEGVDGLLHNSKIKEKLEVGHEIKVKVAEIKNGKVSLDLA).

The protein belongs to the polyribonucleotide nucleotidyltransferase family. It depends on Mg(2+) as a cofactor.

The protein resides in the cytoplasm. The enzyme catalyses RNA(n+1) + phosphate = RNA(n) + a ribonucleoside 5'-diphosphate. In terms of biological role, involved in mRNA degradation. Catalyzes the phosphorolysis of single-stranded polyribonucleotides processively in the 3'- to 5'-direction. The chain is Polyribonucleotide nucleotidyltransferase from Campylobacter lari (strain RM2100 / D67 / ATCC BAA-1060).